The chain runs to 215 residues: Adenylate kinase (215 aa).

Position 10-15 (10-15 (GAGKGT)) interacts with ATP. Residues 30 to 59 (STGDMLRAAVKAGTELGLKAKSVMDAGNLV) are NMP. AMP is bound by residues Thr31, Arg36, 57–59 (NLV), 85–88 (GFPR), and Gln92. The interval 122-159 (GRRVHEGSGRIYHTIFNPPKVEGVDDVTGESLVQRKDD) is LID. ATP contacts are provided by residues Arg123 and 132-133 (IY). Arg156 and Arg167 together coordinate AMP. Residue Gly201 coordinates ATP.

The protein belongs to the adenylate kinase family. As to quaternary structure, monomer.

It is found in the cytoplasm. It carries out the reaction AMP + ATP = 2 ADP. It functions in the pathway purine metabolism; AMP biosynthesis via salvage pathway; AMP from ADP: step 1/1. Catalyzes the reversible transfer of the terminal phosphate group between ATP and AMP. Plays an important role in cellular energy homeostasis and in adenine nucleotide metabolism. The chain is Adenylate kinase from Pseudomonas syringae pv. tomato (strain ATCC BAA-871 / DC3000).